Consider the following 538-residue polypeptide: MTDLNKVVKELEALGIYDVKEVVYNPSYEQLFEEETKPGLEGFEKGTLTTTGAVAVDTGIFTGRSPKDKYIVLDEKTKDTVWWTSETAKNDNKPMNQATWQSLKDLVTNQLSRKRLFVVDGFCGASEHDRIAVRIVTEVAWQAHFVKNMFIRPTEEQLKNFEPDFVVMNGSKVTNPNWKEQGLNSENFVAFNLTERIQLIGGTWYGGEMKKGMSSMMNYFLPLKGVGAMHCSANVGKDGDVAIFFGLSGTGKTTLSTDPKRELIGDDEHGWDDVGIFNFEGGCYAKTIHLSEENEPDIYRAIRRDALLENVVVRSDGSVDFDDGSKTENTRVSYPIYHIDNIVKPVSRAGHATKVIFLTADAFGVLPPVSKLTPEQTKYYFLSGFTAKLAGTERGITEPTPTFSACFGAAFLTLHPTQYAEVLVKRMQAAGAEAYLVNTGWNGTGKRISIKDTRGIIDAILDGSIEKAEMGELPIFNLAIPKALPGVDSAILDPRDTYADKAQWQSKAEDLAGRFVKNFVKYATNEEGKALIAAGPKA.

3 residues coordinate substrate: Arg-64, Tyr-205, and Lys-211. ATP is bound by residues Lys-211, His-230, and 246-254; that span reads GLSGTGKTT. Residues Lys-211 and His-230 each contribute to the Mn(2+) site. Asp-267 is a Mn(2+) binding site. Residues Glu-295, Arg-331, 447–448, and Thr-453 each bind ATP; that span reads RI. Arg-331 contributes to the substrate binding site.

The protein belongs to the phosphoenolpyruvate carboxykinase (ATP) family. Monomer. The cofactor is Mn(2+).

The protein resides in the cytoplasm. The catalysed reaction is oxaloacetate + ATP = phosphoenolpyruvate + ADP + CO2. The protein operates within carbohydrate biosynthesis; gluconeogenesis. Involved in the gluconeogenesis. Catalyzes the conversion of oxaloacetate (OAA) to phosphoenolpyruvate (PEP) through direct phosphoryl transfer between the nucleoside triphosphate and OAA. This Haemophilus influenzae (strain ATCC 51907 / DSM 11121 / KW20 / Rd) protein is Phosphoenolpyruvate carboxykinase (ATP).